The sequence spans 228 residues: Phosphatidylserine decarboxylase proenzyme (228 aa).

The active-site Schiff-base intermediate with substrate; via pyruvic acid is Ser-197. Ser-197 carries the post-translational modification Pyruvic acid (Ser); by autocatalysis.

This sequence belongs to the phosphatidylserine decarboxylase family. PSD-A subfamily. In terms of assembly, heterodimer of a large membrane-associated beta subunit and a small pyruvoyl-containing alpha subunit. It depends on pyruvate as a cofactor. In terms of processing, is synthesized initially as an inactive proenzyme. Formation of the active enzyme involves a self-maturation process in which the active site pyruvoyl group is generated from an internal serine residue via an autocatalytic post-translational modification. Two non-identical subunits are generated from the proenzyme in this reaction, and the pyruvate is formed at the N-terminus of the alpha chain, which is derived from the carboxyl end of the proenzyme. The post-translation cleavage follows an unusual pathway, termed non-hydrolytic serinolysis, in which the side chain hydroxyl group of the serine supplies its oxygen atom to form the C-terminus of the beta chain, while the remainder of the serine residue undergoes an oxidative deamination to produce ammonia and the pyruvoyl prosthetic group on the alpha chain.

It is found in the cell membrane. It carries out the reaction a 1,2-diacyl-sn-glycero-3-phospho-L-serine + H(+) = a 1,2-diacyl-sn-glycero-3-phosphoethanolamine + CO2. It participates in phospholipid metabolism; phosphatidylethanolamine biosynthesis; phosphatidylethanolamine from CDP-diacylglycerol: step 2/2. Catalyzes the formation of phosphatidylethanolamine (PtdEtn) from phosphatidylserine (PtdSer). This chain is Phosphatidylserine decarboxylase proenzyme, found in Phocaeicola vulgatus (strain ATCC 8482 / DSM 1447 / JCM 5826 / CCUG 4940 / NBRC 14291 / NCTC 11154) (Bacteroides vulgatus).